A 290-amino-acid chain; its full sequence is 4-diphosphocytidyl-2-C-methyl-D-erythritol kinase (290 aa).

The active site involves lysine 13. 96 to 106 (PMGGGIGGGSS) contacts ATP. Residue aspartate 138 is part of the active site.

Belongs to the GHMP kinase family. IspE subfamily.

The catalysed reaction is 4-CDP-2-C-methyl-D-erythritol + ATP = 4-CDP-2-C-methyl-D-erythritol 2-phosphate + ADP + H(+). It functions in the pathway isoprenoid biosynthesis; isopentenyl diphosphate biosynthesis via DXP pathway; isopentenyl diphosphate from 1-deoxy-D-xylulose 5-phosphate: step 3/6. Its function is as follows. Catalyzes the phosphorylation of the position 2 hydroxy group of 4-diphosphocytidyl-2C-methyl-D-erythritol. The chain is 4-diphosphocytidyl-2-C-methyl-D-erythritol kinase from Vibrio vulnificus (strain CMCP6).